The chain runs to 135 residues: Galectin-1 (135 aa).

At alanine 2 the chain carries N-acetylalanine. Residues 4 to 135 (GLVASNLNLK…DFKIKCVAFE (132 aa)) enclose the Galectin domain. 2 positions are modified to N6-acetyllysine: lysine 13 and lysine 29. Serine 30 bears the Phosphoserine mark. Residues 45–49 (HFNPR), histidine 53, asparagine 62, and 69–72 (WGAE) each bind a beta-D-galactoside. Lysine 108 carries the post-translational modification N6-acetyllysine; alternate. Lysine 108 bears the N6-succinyllysine; alternate mark. An N6-acetyllysine modification is found at lysine 128.

As to quaternary structure, homodimer. Binds LGALS3BP. Interacts with CD2, CD3, CD4, CD6, CD7, CD43, ALCAM and CD45. Interacts with laminin (via poly-N-acetyllactosamine). Interacts with SUSD2. Interacts with cargo receptor TMED10; the interaction mediates the translocation from the cytoplasm into the ERGIC (endoplasmic reticulum-Golgi intermediate compartment) and thereby secretion.

It localises to the secreted. The protein localises to the extracellular space. It is found in the extracellular matrix. The protein resides in the cytoplasm. In terms of biological role, lectin that binds beta-galactoside and a wide array of complex carbohydrates. Plays a role in regulating apoptosis, cell proliferation and cell differentiation. Inhibits CD45 protein phosphatase activity and therefore the dephosphorylation of Lyn kinase. Strong inducer of T-cell apoptosis. Has hemagglutinating activity towards human erythrocytes. The polypeptide is Galectin-1 (Capra hircus (Goat)).